The primary structure comprises 448 residues: Vacuolar amino acid transporter 6 (448 aa).

The Cytoplasmic portion of the chain corresponds to 1 to 7 (MVASIRS). A helical transmembrane segment spans residues 8 to 28 (GVLTLLHTACGAGILAMPYAF). Residues 29–32 (KPFG) are Vacuolar-facing. The chain crosses the membrane as a helical span at residues 33–53 (LIPGVIMIVLCGACAMQSLFI). Residues 54–80 (QARVAKYVPQGRASFSALTRLINPNLG) lie on the Cytoplasmic side of the membrane. The helical transmembrane segment at 81-101 (IVFDLAIAIKCFGVGVSYMIV) threads the bilayer. Over 102–125 (VGDLMPQIMSVWTRNAWLLNRNVQ) the chain is Vacuolar. Residues 126–146 (ISLIMLFFVAPLSFLKKLNSL) traverse the membrane as a helical segment. Residues 147–150 (RYAS) are Cytoplasmic-facing. The chain crosses the membrane as a helical span at residues 151-171 (MVAISSVAYLCVLVLLHYVAP). At 172–195 (SDEILRLKGRISYLLPPQSHDLNV) the chain is on the vacuolar side. A helical transmembrane segment spans residues 196 to 216 (LNTLPIFVFAYTCHHNMFSII). Over 217–229 (NEQRSSRFEHVMK) the chain is Cytoplasmic. A helical membrane pass occupies residues 230-250 (IPLIAISLALILYIAIGCAGY). Residues 251 to 267 (LTFGDNIIGNIIMLYPQ) are Vacuolar-facing. A helical membrane pass occupies residues 268-288 (AVSSTIGRIAIVLLVMLAFPL). Residues 289 to 357 (QCHPARASIH…PKETPLRGKS (69 aa)) lie on the Cytoplasmic side of the membrane. Residue Ser344 is modified to Phosphoserine. A helical transmembrane segment spans residues 358–378 (FIVITCSILVASYLVAISVSS). The Vacuolar segment spans residues 379–381 (LAR). A helical transmembrane segment spans residues 382 to 402 (VLAIVGATGSTSISFILPGLF). Over 403–424 (GYKLIGTEHKTAVPLTTKIFKY) the chain is Cytoplasmic. A helical membrane pass occupies residues 425 to 445 (TGLLLFIWGLIIMITCLTAAL). Topologically, residues 446–448 (KLN) are vacuolar.

It belongs to the amino acid/polyamine transporter 2 family.

The protein resides in the vacuole membrane. Involved in amino acid efflux from the vacuole to the cytoplasm. Capable of transporting aspartate and glutamate. Requires ATP for function. The chain is Vacuolar amino acid transporter 6 (AVT6) from Saccharomyces cerevisiae (strain ATCC 204508 / S288c) (Baker's yeast).